The following is a 223-amino-acid chain: Ribonuclease 3 (223 aa).

Positions 3–125 (LERLQKKLSY…IIAAIYLDAG (123 aa)) constitute an RNase III domain. Mg(2+) is bound at residue glutamate 38. Aspartate 42 is an active-site residue. Residues aspartate 111 and glutamate 114 each coordinate Mg(2+). Residue glutamate 114 is part of the active site. In terms of domain architecture, DRBM spans 152–222 (DPKTRLQEFL…AEQVLAKLTT (71 aa)).

It belongs to the ribonuclease III family. In terms of assembly, homodimer. Mg(2+) is required as a cofactor.

It localises to the cytoplasm. It carries out the reaction Endonucleolytic cleavage to 5'-phosphomonoester.. Functionally, digests double-stranded RNA. Involved in the processing of primary rRNA transcript to yield the immediate precursors to the large and small rRNAs (23S and 16S). Processes some mRNAs, and tRNAs when they are encoded in the rRNA operon. Processes pre-crRNA and tracrRNA of type II CRISPR loci if present in the organism. This is Ribonuclease 3 from Actinobacillus pleuropneumoniae serotype 5b (strain L20).